The chain runs to 26 residues: AMP deaminase 1 (26 aa).

This sequence belongs to the metallo-dependent hydrolases superfamily. Adenosine and AMP deaminases family. As to quaternary structure, homotetramer. It depends on Zn(2+) as a cofactor.

The enzyme catalyses AMP + H2O + H(+) = IMP + NH4(+). Its pathway is purine metabolism; IMP biosynthesis via salvage pathway; IMP from AMP: step 1/1. Functionally, AMP deaminase plays a critical role in energy metabolism. The protein is AMP deaminase 1 (AMPD1) of Oryctolagus cuniculus (Rabbit).